The following is a 363-amino-acid chain: Phosphoserine aminotransferase (363 aa).

An L-glutamate-binding site is contributed by Arg-42. Residues 76–77 (GR), Trp-102, Thr-156, Asp-175, and Gln-198 contribute to the pyridoxal 5'-phosphate site. Lys-199 carries the N6-(pyridoxal phosphate)lysine modification. Residue 240–241 (NT) coordinates pyridoxal 5'-phosphate.

Belongs to the class-V pyridoxal-phosphate-dependent aminotransferase family. SerC subfamily. As to quaternary structure, homodimer. Pyridoxal 5'-phosphate serves as cofactor.

The protein resides in the cytoplasm. It catalyses the reaction O-phospho-L-serine + 2-oxoglutarate = 3-phosphooxypyruvate + L-glutamate. The catalysed reaction is 4-(phosphooxy)-L-threonine + 2-oxoglutarate = (R)-3-hydroxy-2-oxo-4-phosphooxybutanoate + L-glutamate. It participates in amino-acid biosynthesis; L-serine biosynthesis; L-serine from 3-phospho-D-glycerate: step 2/3. It functions in the pathway cofactor biosynthesis; pyridoxine 5'-phosphate biosynthesis; pyridoxine 5'-phosphate from D-erythrose 4-phosphate: step 3/5. Functionally, catalyzes the reversible conversion of 3-phosphohydroxypyruvate to phosphoserine and of 3-hydroxy-2-oxo-4-phosphonooxybutanoate to phosphohydroxythreonine. In Shewanella baltica (strain OS195), this protein is Phosphoserine aminotransferase.